A 343-amino-acid chain; its full sequence is Tryptophan--tRNA ligase (343 aa).

ATP is bound by residues 15-17 (QPT) and 24-25 (GN). Positions 16-25 (PTSDSLHLGN) match the 'HIGH' region motif. D145 lines the L-tryptophan pocket. ATP contacts are provided by residues 157 to 159 (GED), I196, and 205 to 209 (KMSKS). The short motif at 205 to 209 (KMSKS) is the 'KMSKS' region element.

This sequence belongs to the class-I aminoacyl-tRNA synthetase family. As to quaternary structure, homodimer.

It is found in the cytoplasm. The enzyme catalyses tRNA(Trp) + L-tryptophan + ATP = L-tryptophyl-tRNA(Trp) + AMP + diphosphate + H(+). Functionally, catalyzes the attachment of tryptophan to tRNA(Trp). The polypeptide is Tryptophan--tRNA ligase (Mycobacterium leprae (strain TN)).